Here is a 512-residue protein sequence, read N- to C-terminus: cAMP-dependent protein kinase catalytic subunit (512 aa).

Polar residues predominate over residues 1-15 (MDTTAVASKGSTNVG). Disordered stretches follow at residues 1 to 79 (MDTT…SSLW) and 118 to 166 (IDNL…GLRD). Low complexity predominate over residues 16–27 (SSTDTLSTSASL). Composition is skewed to polar residues over residues 32-52 (NAGSVNEYSEQQRHGTNSFNG) and 62-79 (SDASVSNGHNNHNESSLW). The segment covering 143–166 (SRDGRGELGSEHGERRSAMDGLRD) has biased composition (basic and acidic residues). The Protein kinase domain occupies 201–456 (FNFLQTLGTG…SMDIIMHPWF (256 aa)). ATP contacts are provided by residues 207–215 (LGTGSFGRV) and K230. Catalysis depends on D324, which acts as the Proton acceptor. The residue at position 356 (T356) is a Phosphothreonine. The region spanning 457-512 (RDISWDKILTRKIEVPYVPPIQAGMGDSSQFDAYADVATDYGTSEDPEFTSIFKDF) is the AGC-kinase C-terminal domain.

It belongs to the protein kinase superfamily. AGC Ser/Thr protein kinase family. cAMP subfamily.

It carries out the reaction L-seryl-[protein] + ATP = O-phospho-L-seryl-[protein] + ADP + H(+). It catalyses the reaction L-threonyl-[protein] + ATP = O-phospho-L-threonyl-[protein] + ADP + H(+). With respect to regulation, activated by cAMP. This chain is cAMP-dependent protein kinase catalytic subunit (pka1), found in Schizosaccharomyces pombe (strain 972 / ATCC 24843) (Fission yeast).